Here is a 484-residue protein sequence, read N- to C-terminus: Putative beta-barrel assembly-enhancing protease (484 aa).

The first 23 residues, 1–23, serve as a signal peptide directing secretion; the sequence is MKFFPTRTLLCLCIAAPCLPAIA. Histidine 133 serves as a coordination point for Zn(2+). Glutamate 134 is a catalytic residue. Residues histidine 137 and glutamate 198 each coordinate Zn(2+). Aspartate 202 functions as the Proton donor in the catalytic mechanism. TPR repeat units follow at residues 307 to 340, 341 to 374, 376 to 408, and 426 to 459; these read PSIQYGKALVYLDLKQFDKAEPLLTQLVKEQPDN, HFYLDAISDLYIELKQADKAQSLLEKALKQTPNN, VLTINYANVLLKQDKFTDAIRILQRYTHDNPND, and AEDLAARGEIMALQANWNKAIQFYTQASQLVELG.

The protein belongs to the peptidase M48 family. BepA subfamily. Zn(2+) serves as cofactor.

It is found in the periplasm. Functions both as a chaperone and a metalloprotease. Maintains the integrity of the outer membrane by promoting either the assembly or the elimination of outer membrane proteins, depending on their folding state. The protein is Putative beta-barrel assembly-enhancing protease of Vibrio cholerae serotype O1 (strain ATCC 39315 / El Tor Inaba N16961).